The following is a 308-amino-acid chain: Autophagy-related protein 3 (308 aa).

The segment at 83–159 (NFVETQTTET…NELADDDDDI (77 aa)) is flexible region. Positions 89–121 (TTETRDVGDGWELEGQSEGERESGREDTKSNEE) are disordered. The segment covering 106 to 120 (EGERESGREDTKSNE) has biased composition (basic and acidic residues). Residue Cys235 is the Glycyl thioester intermediate of the active site. A handle region region spans residues 239 to 283 (NVMKVLMEKVRASRHRARDTEAQKNAEEDWEDLQSDIDDGLRVDQ).

Belongs to the ATG3 family. As to quaternary structure, monomer. Interacts with ATG8 through an intermediate thioester bond between Cys-235 and the C-terminal Gly of ATG8. Interacts with the C-terminal region of the E1-like ATG7 enzyme. Also interacts with the ATG12-ATG5 conjugate.

It is found in the cytoplasm. E2 conjugating enzyme required for the cytoplasm to vacuole transport (Cvt) and autophagy. Required for selective autophagic degradation of the nucleus (nucleophagy) as well as for mitophagy which contributes to regulate mitochondrial quantity and quality by eliminating the mitochondria to a basal level to fulfill cellular energy requirements and preventing excess ROS production. Responsible for the E2-like covalent binding of phosphatidylethanolamine to the C-terminal Gly of ATG8. The ATG12-ATG5 conjugate plays a role of an E3 and promotes the transfer of ATG8 from ATG3 to phosphatidylethanolamine (PE). This step is required for the membrane association of ATG8. The formation of the ATG8-phosphatidylethanolamine conjugate is essential for autophagy and for the cytoplasm to vacuole transport (Cvt). The ATG8-PE conjugate mediates tethering between adjacent membranes and stimulates membrane hemifusion, leading to expansion of the autophagosomal membrane during autophagy. This Kluyveromyces marxianus (strain DMKU3-1042 / BCC 29191 / NBRC 104275) (Yeast) protein is Autophagy-related protein 3.